A 337-amino-acid chain; its full sequence is uncharacterized protein (337 aa).

One can recognise an F-box domain in the interval 12–60 (SLNYVDLPDTVHRKIFEYLNPWEIFKLSRISKAIHVTILKNKKFAVKDI).

This is an uncharacterized protein from Caenorhabditis elegans.